A 214-amino-acid polypeptide reads, in one-letter code: Riboflavin kinase (214 aa).

The segment at 1-26 (MRPDGPRDPVVGPDSGPEPPYPVRLS) is disordered. Threonine 44 and asparagine 46 together coordinate Mg(2+). The Nucleophile role is filled by glutamate 112.

Belongs to the flavokinase family. Requires Zn(2+) as cofactor. Mg(2+) serves as cofactor.

The catalysed reaction is riboflavin + ATP = FMN + ADP + H(+). It participates in cofactor biosynthesis; FMN biosynthesis; FMN from riboflavin (ATP route): step 1/1. In terms of biological role, catalyzes the phosphorylation of riboflavin (vitamin B2) to form flavin mononucleotide (FMN) coenzyme. In Aspergillus clavatus (strain ATCC 1007 / CBS 513.65 / DSM 816 / NCTC 3887 / NRRL 1 / QM 1276 / 107), this protein is Riboflavin kinase (fmn1).